The following is a 103-amino-acid chain: uncharacterized protein (103 aa).

The signal sequence occupies residues 1–22 (MFRPFLNSLMLGSLFFPFIAIA).

It to the N-terminal of the FimA/PapA family of fimbria proteins.

This is an uncharacterized protein from Escherichia coli (strain K12).